Reading from the N-terminus, the 355-residue chain is Small ribosomal subunit biogenesis GTPase RsgA 1 (355 aa).

The CP-type G domain occupies 103 to 262; that stretch reads GRVADRQAIA…LIDTPGVREF (160 aa). GTP is bound by residues 152-155 and 204-212; these read NKAD and GSSGVGKSS. 4 residues coordinate Zn(2+): cysteine 285, cysteine 290, histidine 292, and cysteine 298.

It belongs to the TRAFAC class YlqF/YawG GTPase family. RsgA subfamily. Monomer. Associates with 30S ribosomal subunit, binds 16S rRNA. Zn(2+) is required as a cofactor.

It is found in the cytoplasm. In terms of biological role, one of several proteins that assist in the late maturation steps of the functional core of the 30S ribosomal subunit. Helps release RbfA from mature subunits. May play a role in the assembly of ribosomal proteins into the subunit. Circularly permuted GTPase that catalyzes slow GTP hydrolysis, GTPase activity is stimulated by the 30S ribosomal subunit. This is Small ribosomal subunit biogenesis GTPase RsgA 1 from Bacteroides thetaiotaomicron (strain ATCC 29148 / DSM 2079 / JCM 5827 / CCUG 10774 / NCTC 10582 / VPI-5482 / E50).